Reading from the N-terminus, the 2530-residue chain is MLLQFLLLSLCVSVATAKVITGVFNSFDSLTWTRAGNYAYKGPNRPTWNAVLGWSLDGTSANPGDTFTLNMPCVFKFITDQTSVDLTADGVKYATCQFYSGEEFTTFSSLKCTVSNTLTSSIKALGTVTLPISFNVGGTGSLVDLESSKCFKAGTNTVTFNDGDKKISIDVDFEKTNEDASGYFIASRLIPSINKASITYVAPQCANGYTSGAMGFTIGSGDTTIDCSNVHVGITKGLNDWNFPVSSDSLSYNKTCSSTGISITYENVPAGYRPFFDVYTSVSDQNRQLKYTNDYACVGSSLQSKPFNLRLRGYNNSEANSNGFVIVATTRTVTDSTTAVTTLPFNPSVDKTKTIEILQPIPTTTITTSYVGVTTSYSTKTAPIGETATVIVDVPYHTTTTVTSEWTGTITTTTTRTNPTDSIDTVVVQVPSPNPTVTTTEYWSQSYATTTTVTAPPGGTDSVIIREPPNPTVTTTEYWSQSYATSSTVTAPPGGTDTVIIREPPNPTVTTTEYWSQSYATTTTVTAPPGGTDSVIIREPPNPTVTTTEYWSQSFATTTTITAPPGETDTVLIREPPNHTVTTTEYWSQSYVTTSTITAPPGGTDTVIIREPPNYTVTTTEYWSQSYATTTTVTAPPGGTDTVIIREPPNPTVTTTEYWSQSYATTTTVTGPPGGTDTVIIREPPNPTVTTTEYWSQSYATTTTVTAPPGGTDTVIIREPPNPTVTTTEYWSQSYATTTTVTGPPGGTDTVIIREPPNPTVTTTEYWSQSYATTTTVTAPPGGTATVIIREPPNPTVTTTEYWSQSYATTTTVTGPPGGTDTVIIREPPNPTVTTTEYWSQSYATTTTVTAPPGGTATVIIREPPNYTVTTTEYWSQSYATTTTVTGPPGGTDTVIIREPPSPTVTTTEYWSQSYATTTTVTAPPGGTATVIIREPPNPTVTTTEYWSQSYATTTTVTGPPGGTDTVIIREPPNPTVTTTEYWSQSYATTTTVTAPPGGTATVIIREPPNYTVTTTEYWSQSYATTTTVTGPPGGTDTVIIREPPSPTVTTTEYWSQSYATTTTVTAPPGGTATVIIREPPNPTVTTTEYWSQSYATTTTVTGPPGGTDTVIIREPPSPTVTTTEYWSQSYATTTTVTAPPGGTATVIIREPPNYTVTTTEYWSQSYATTTTVTGPPGGTDTVIIREPPNPTVTTTEYWSQSFATTTTVTAPPGGTDSVIIREPPNPTVTTTEYWSQSYATTTTVTAPPGGTDSVIIREPPNPTVTTTEYWSQSFATTTTVTAPPGGTDSVIIREPPNPTVTTTEYWSQSYATTTTVTAPPGGTDSVIIREPPNPTVTTTEYWSQSYATTTTVTAPPGGTATVIIREPPNYTVTTTEYWSQSYATTTTVTAPPGGTATVIIREPPNYTVTTTEYWSQSYATTTTITAPPGDTDTVIIREPPNYTVTTTEYWSQSFATTTTVTAPPGGTDSVIIREPPNPTVTTTEYWSQSYATTTTVTAPPGGTATVIIREPPNYTVTTTEYWSQSYATTTTVTAPPGGTATVIIREPPNYTVTTTEYWSQSYATTTTITAPPGDTDTVIIREPPNYTVTTTEYWSQSYATTTTVTAPPGGTDTVIIREPPNYTVTTTEYWSQSYATTTTVTAPPGGTATVIIREPPNYTVTTTEYWSQSYATTTTVTGPPGSTDTVIIREPPNPTVTTTEYWSQSYATTTTVTAPPGGTATVIIREPPNYTVTTTEYWSQSYATTTTVTAPPGGTDTVIIREPPNYTVTTTEYWSQSYATTTTVTAPPGGTDTVIIREPPSPTVTTTEYWSQSYATTTTVTAPPGGTATVIIREPPNYTVTTTEYWSESYATTTTVTGPPGGTDVILIREPPNPTVTTTEYWSESYATTTTITAPPGATDSVRIREPPNYTVTTTEYWSQSYATTTTVTAPPGGTDSVIIREPPNPTVTTTEYWSQSYATTTTVTAPPGGTATVIIREPPNYTVTTTEYWSQSYATTTTVTAPPGGTDTVIIREPPSPTVTTTEYWSQSYATTTTVTAPPGGTATVIIREPPSPTVTTTEYWSQSYATTTTVTAPPGGTATVIIREPPNYTVTTTEYWSQSYATTTTVTGPPGGTDTVIIREPPNPTVTTTEYWSQSYATTLTITAPPGGTNSVIIRVHSSTNDESSESTFSTLSVPSFSGSISVVSTVSRPHYVNSTVTHLPSSSSKPVDIPSSDVVTSTNDNSLTSLTGSENGKTSVAISTTFCDDENGCQTSIPQGSVVRTTATTTATTTTIIGDNNGSGKSKSGELSSTGSVTTNTATPDVPSTKVPSNPGAPGTGVPPPLAPSTETQTTNNVPGSPNIPATGTTDIIRESTTVSHTVTGNGNTGVPMNPNPVLTTSTSLTGATNSATNPSHETSVNTGSGGSTNIVTPPSSATATVVIPGTDNGATTKGQDTAGGNSNGSTATTNIQGGNNEPGNQPGTNTTGEPVGTTDTQSVESISQPTTLSQQTTSSLISTPLASTFDGSGSIVQHSGWLYVLLTAISIFF.

The N-terminal stretch at 1–17 (MLLQFLLLSLCVSVATA) is a signal peptide. 4 cysteine pairs are disulfide-bonded: Cys73–Cys150, Cys96–Cys112, Cys205–Cys297, and Cys227–Cys256. 2 N-linked (GlcNAc...) asparagine glycosylation sites follow: Asn253 and Asn315. 6 ALS repeats span residues 364–395 (TTIT…VDVP), 400–431 (TTVT…VQVP), 437–468 (VTTT…IREP), 473–504 (VTTT…IREP), 509–540 (VTTT…IREP), and 545–576 (VTTT…IREP). A glycan (N-linked (GlcNAc...) asparagine) is linked at Asn578. The ALS 7 repeat unit spans residues 581–612 (VTTTEYWSQSYVTTSTITAPPGGTDTVIIREP). The N-linked (GlcNAc...) asparagine glycan is linked to Asn614. 7 ALS repeats span residues 617-648 (VTTT…IREP), 653-684 (VTTT…IREP), 689-720 (VTTT…IREP), 725-756 (VTTT…IREP), 761-792 (VTTT…IREP), 797-828 (VTTT…IREP), and 833-864 (VTTT…IREP). Asn866 carries an N-linked (GlcNAc...) asparagine glycan. 4 ALS repeats span residues 869 to 900 (VTTT…IREP), 905 to 936 (VTTT…IREP), 941 to 972 (VTTT…IREP), and 977 to 1008 (VTTT…IREP). Over residues 954-967 (TTTVTGPPGGTDTV) the composition is skewed to low complexity. A disordered region spans residues 954 to 975 (TTTVTGPPGGTDTVIIREPPNP). Asn1010 carries N-linked (GlcNAc...) asparagine glycosylation. 4 ALS repeats span residues 1013–1044 (VTTT…IREP), 1049–1077 (VTTT…TVII), 1085–1116 (VTTT…IREP), and 1121–1152 (VTTT…IREP). Asn1154 carries N-linked (GlcNAc...) asparagine glycosylation. 6 ALS repeats span residues 1157–1188 (VTTT…IREP), 1193–1224 (VTTT…IREP), 1229–1260 (VTTT…IREP), 1265–1296 (VTTT…IREP), 1301–1332 (VTTT…IREP), and 1337–1368 (VTTT…IREP). Asn1370 carries an N-linked (GlcNAc...) asparagine glycan. Residues 1373–1404 (VTTTEYWSQSYATTTTVTAPPGGTATVIIREP) form an ALS 29 repeat. The N-linked (GlcNAc...) asparagine glycan is linked to Asn1406. The ALS 30 repeat unit spans residues 1409–1440 (VTTTEYWSQSYATTTTITAPPGDTDTVIIREP). Asn1442 carries N-linked (GlcNAc...) asparagine glycosylation. ALS repeat units follow at residues 1445 to 1476 (VTTT…IREP) and 1481 to 1512 (VTTT…IREP). N-linked (GlcNAc...) asparagine glycosylation occurs at Asn1514. The ALS 33 repeat unit spans residues 1517–1548 (VTTTEYWSQSYATTTTVTAPPGGTATVIIREP). Asn1550 is a glycosylation site (N-linked (GlcNAc...) asparagine). The ALS 34 repeat unit spans residues 1553-1584 (VTTTEYWSQSYATTTTITAPPGDTDTVIIREP). N-linked (GlcNAc...) asparagine glycosylation occurs at Asn1586. The ALS 35 repeat unit spans residues 1589-1620 (VTTTEYWSQSYATTTTVTAPPGGTDTVIIREP). Asn1622 carries an N-linked (GlcNAc...) asparagine glycan. Residues 1625 to 1656 (VTTTEYWSQSYATTTTVTAPPGGTATVIIREP) form an ALS 36 repeat. Asn1658 carries an N-linked (GlcNAc...) asparagine glycan. ALS repeat units follow at residues 1661–1692 (VTTT…IREP) and 1697–1728 (VTTT…IREP). Asn1730 carries an N-linked (GlcNAc...) asparagine glycan. An ALS 39 repeat occupies 1733 to 1764 (VTTTEYWSQSYATTTTVTAPPGGTDTVIIREP). Asn1766 carries an N-linked (GlcNAc...) asparagine glycan. ALS repeat units follow at residues 1769–1800 (VTTT…IREP) and 1805–1836 (VTTT…IREP). The N-linked (GlcNAc...) asparagine glycan is linked to Asn1838. ALS repeat units lie at residues 1841–1872 (VTTT…IREP) and 1877–1907 (VTTT…RIRE). Residue Asn1910 is glycosylated (N-linked (GlcNAc...) asparagine). ALS repeat units lie at residues 1913 to 1944 (VTTT…IREP) and 1949 to 1980 (VTTT…IREP). N-linked (GlcNAc...) asparagine glycosylation occurs at Asn1982. 3 ALS repeats span residues 1985–2016 (VTTT…IREP), 2021–2052 (VTTT…IREP), and 2057–2088 (VTTT…IREP). Asn2090 carries N-linked (GlcNAc...) asparagine glycosylation. ALS repeat units follow at residues 2093-2124 (VTTT…IREP) and 2129-2157 (VTTT…SVII). Asn2197 is a glycosylation site (N-linked (GlcNAc...) asparagine). Disordered regions lie at residues 2200–2235 (VTHL…GSEN) and 2274–2494 (TTII…QQTT). Residues 2204-2233 (PSSSSKPVDIPSSDVVTSTNDNSLTSLTGS) show a composition bias toward low complexity. N-linked (GlcNAc...) asparagine glycosylation is present at Asn2281. The span at 2282-2296 (GSGKSKSGELSSTGS) shows a compositional bias: low complexity. Polar residues-rich tracts occupy residues 2329–2420 (STET…SATA) and 2429–2452 (NGAT…TTNI). N-linked (GlcNAc...) asparagine glycans are attached at residues Asn2444 and Asn2466. 2 stretches are compositionally biased toward low complexity: residues 2453–2471 (QGGN…TGEP) and 2482–2494 (SISQ…QQTT). A lipid anchor (GPI-anchor amidated aspartate) is attached at Asp2507. A propeptide spans 2508-2530 (GSGSIVQHSGWLYVLLTAISIFF) (removed in mature form).

This sequence belongs to the ALS family. Post-translationally, N-glycosylated and O-glycosylated. In terms of processing, the GPI-anchor is attached to the protein in the endoplasmic reticulum and serves to target the protein to the cell surface. There, the glucosamine-inositol phospholipid moiety is cleaved off and the GPI-modified mannoprotein is covalently attached via its lipidless GPI glycan remnant to the 1,6-beta-glucan of the outer cell wall layer.

It is found in the cell membrane. It localises to the secreted. The protein localises to the cell wall. Cell surface adhesion protein which mediates both yeast-to-host tissue adherence and yeast aggregation. Plays an important role in the pathogenesis of C.albicans infections. This is Agglutinin-like protein 2 (ALS2) from Candida albicans (strain SC5314 / ATCC MYA-2876) (Yeast).